Reading from the N-terminus, the 262-residue chain is E3 ubiquitin-protein ligase NEURL3 (262 aa).

The region spanning 17–173 is the NHR domain; it reads ALRFHAEAKG…TTKAIELLDP (157 aa). The segment at 202 to 241 adopts an RING-type zinc-finger fold; that stretch reads CAICFYHAANTRLVPCGHTYFCRYCAWRVFSDTAKCPVCR.

In terms of assembly, (Microbial infection) Interacts with hepatitis C virus protein E1; this interaction prevents E1 interaction with E2 and subsequently inhibits viral infection.

It localises to the cytoplasm. The catalysed reaction is S-ubiquitinyl-[E2 ubiquitin-conjugating enzyme]-L-cysteine + [acceptor protein]-L-lysine = [E2 ubiquitin-conjugating enzyme]-L-cysteine + N(6)-ubiquitinyl-[acceptor protein]-L-lysine.. Its pathway is protein modification; protein ubiquitination. Functionally, E3 ubiquitin-protein ligase that plays a role in various biological processes such as lung development or innate immunity. Seems to utilize UBE2E1. Promotes innate antiviral response by catalyzing 'Lys-63'-linked ubiquitination of IRF7. Also inhibits hepatitis C virus assembly by directly binding to viral E1 envelope glycoprotein to disrupt its interaction with E2. Plays an essential role in TLR4-mediated activation of MAPK pathways by promoting 'Lys-48'-linked polyubiquitination of the phosphatase DUSP1/MKP1. In Homo sapiens (Human), this protein is E3 ubiquitin-protein ligase NEURL3 (NEURL3).